The sequence spans 539 residues: Heparanase-like protein 2 (539 aa).

The signal sequence occupies residues Met1 to Gly21. N-linked (GlcNAc...) asparagine glycosylation is found at Asn143, Asn163, and Asn181. The active-site Proton donor is Glu198. An N-linked (GlcNAc...) asparagine glycan is attached at Asn300. Catalysis depends on Glu316, which acts as the Nucleophile. Residue Asn421 is glycosylated (N-linked (GlcNAc...) asparagine).

The protein belongs to the glycosyl hydrolase 79 family.

The protein resides in the lysosome membrane. Its subcellular location is the secreted. In terms of biological role, endoglycosidase which is a cell surface and extracellular matrix-degrading enzyme. Cleaves heparan sulfate proteoglycans (HSPGs) into heparan sulfate side chains and core proteoglycans. This Arabidopsis thaliana (Mouse-ear cress) protein is Heparanase-like protein 2.